The following is a 383-amino-acid chain: Phosphoenolpyruvate/phosphate translocator 2, chloroplastic (383 aa).

Residues 1 to 55 (MFALTFLNPNPRLPSPLFLAKSTPESALSRRSRAFSSSNSYPWRPNLRFNGFKLK) constitute a chloroplast transit peptide. Helical transmembrane passes span 76-96 (GLKL…YNIF), 108-128 (ATVT…MWLL), 143-163 (VIVQ…VSLG), 179-199 (FFTV…WIVC), 210-232 (LASF…SNVT), 253-273 (INLF…LAIL), 299-319 (IMSL…YMIL), and 350-369 (VSPL…YLYS). The EamA domain maps to 93-212 (YNIFNKQVLR…PIVAGVSLAS (120 aa)).

Belongs to the TPT transporter family. PPT (TC 2.A.7.9) subfamily. Widely expressed in leaves throughout development. In flowers, expressed in sepals and pistils.

It is found in the plastid. It localises to the chloroplast membrane. Its function is as follows. Phosphoenolpyruvate/phosphate translocator that transports phosphoenolpyruvate (PEP), 2-phosphoglycerate and 3-phosphoglycerate. The protein is Phosphoenolpyruvate/phosphate translocator 2, chloroplastic (PPT2) of Arabidopsis thaliana (Mouse-ear cress).